The following is a 219-amino-acid chain: Lipid A acyltransferase PagP (219 aa).

The first 28 residues, 1 to 28, serve as a signal peptide directing secretion; that stretch reads MRLILISHSRLFALSALFLIPTFDSLSA. The interval 39 to 63 is disordered; it reads IDRTTQSDSTTQRDSKTRRDPAPSF. Basic and acidic residues predominate over residues 49 to 59; it reads TQRDSKTRRDP. Catalysis depends on residues histidine 91, aspartate 134, and serine 135.

The protein belongs to the lipid A palmitoyltransferase family. Homodimer.

The protein localises to the cell outer membrane. It carries out the reaction a lipid A + a 1,2-diacyl-sn-glycero-3-phosphocholine = a hepta-acyl lipid A + a 2-acyl-sn-glycero-3-phosphocholine. The enzyme catalyses a lipid IVA + a 1,2-diacyl-sn-glycero-3-phosphocholine = a lipid IVB + a 2-acyl-sn-glycero-3-phosphocholine. The catalysed reaction is a lipid IIA + a 1,2-diacyl-sn-glycero-3-phosphocholine = a lipid IIB + a 2-acyl-sn-glycero-3-phosphocholine. Transfers a fatty acid residue from the sn-1 position of a phospholipid to the N-linked hydroxyfatty acid chain on the proximal unit of lipid A or its precursors. This Dickeya zeae (strain Ech586) (Dickeya dadantii (strain Ech586)) protein is Lipid A acyltransferase PagP.